Here is a 206-residue protein sequence, read N- to C-terminus: Ribosomal RNA small subunit methyltransferase G (206 aa).

S-adenosyl-L-methionine is bound by residues Gly-73, Leu-78, 124 to 125, and Arg-139; that span reads VE.

This sequence belongs to the methyltransferase superfamily. RNA methyltransferase RsmG family.

It is found in the cytoplasm. It catalyses the reaction guanosine(527) in 16S rRNA + S-adenosyl-L-methionine = N(7)-methylguanosine(527) in 16S rRNA + S-adenosyl-L-homocysteine. Functionally, specifically methylates the N7 position of guanine in position 527 of 16S rRNA. The polypeptide is Ribosomal RNA small subunit methyltransferase G (Idiomarina loihiensis (strain ATCC BAA-735 / DSM 15497 / L2-TR)).